A 402-amino-acid polypeptide reads, in one-letter code: 26S proteasome non-ATPase regulatory subunit 4 homolog (402 aa).

Residues 5–189 (ATMICIDNSE…LSDVLISTPI (185 aa)) enclose the VWFA domain. The UIM 1 domain occupies 221-240 (NVDPELALALRLSMEEERAR). A compositionally biased stretch (basic and acidic residues) spans 241–261 (QEAIAKKAAEESSGAENKDHA). Disordered regions lie at residues 241-292 (QEAI…EDDD) and 302-321 (MSME…MAEA). UIM domains follow at residues 291–310 (DDAQ…GSSG) and 323–342 (VDDQ…AGGS). The interval 363–402 (SLPGVDPNDPSVKDLLASLHGQGEQEKKEDKSDKPEDEKK) is disordered. The span at 385–402 (GEQEKKEDKSDKPEDEKK) shows a compositional bias: basic and acidic residues.

Belongs to the proteasome subunit S5A family. As to quaternary structure, component of the 19S regulatory particle (RP/PA700) base subcomplex of the 26S proteasome. The 26S proteasome is composed of a core protease (CP), known as the 20S proteasome, capped at one or both ends by the 19S regulatory particle (RP/PA700). The RP/PA700 complex is composed of at least 17 different subunits in two subcomplexes, the base and the lid, which form the portions proximal and distal to the 20S proteolytic core, respectively. Interacts with PI4KG4.

Plays a role in maintaining the structural integrity of the 19S regulatory particle (RP), subcomplex of the 26S proteasome. Plays a major role in both the direct and indirect recognition of ubiquitinated substrates of ubiquitin/26S proteasome-mediated proteolysis (UPP). Binds and presumably selects ubiquitin-conjugates for destruction. The chain is 26S proteasome non-ATPase regulatory subunit 4 homolog from Oryza sativa subsp. japonica (Rice).